Reading from the N-terminus, the 1381-residue chain is DNA-directed RNA polymerase subunit beta'' (1381 aa).

4 residues coordinate Zn(2+): cysteine 224, cysteine 295, cysteine 302, and cysteine 305.

It belongs to the RNA polymerase beta' chain family. RpoC2 subfamily. In plastids the minimal PEP RNA polymerase catalytic core is composed of four subunits: alpha, beta, beta', and beta''. When a (nuclear-encoded) sigma factor is associated with the core the holoenzyme is formed, which can initiate transcription. It depends on Zn(2+) as a cofactor.

It localises to the plastid. Its subcellular location is the chloroplast. It carries out the reaction RNA(n) + a ribonucleoside 5'-triphosphate = RNA(n+1) + diphosphate. DNA-dependent RNA polymerase catalyzes the transcription of DNA into RNA using the four ribonucleoside triphosphates as substrates. The polypeptide is DNA-directed RNA polymerase subunit beta'' (Guizotia abyssinica (Niger)).